The chain runs to 583 residues: Pre-mRNA-processing protein 45 (583 aa).

Disordered regions lie at residues Met-1–Asp-68, Lys-177–Glu-253, Met-321–Arg-424, and Arg-519–Asn-583. A compositionally biased stretch (basic and acidic residues) spans Thr-203–Lys-225. Over residues Arg-233–His-244 the composition is skewed to pro residues. Over residues Leu-325 to Arg-350 the composition is skewed to basic and acidic residues. Low complexity predominate over residues Arg-367–Arg-377. Composition is skewed to basic and acidic residues over residues Ala-386–Arg-424, Arg-519–Ala-538, and Pro-569–Asn-583.

The protein belongs to the SNW family. As to quaternary structure, associated with the spliceosome.

The protein localises to the nucleus. In terms of biological role, involved in pre-mRNA splicing. In Emericella nidulans (strain FGSC A4 / ATCC 38163 / CBS 112.46 / NRRL 194 / M139) (Aspergillus nidulans), this protein is Pre-mRNA-processing protein 45 (prp45).